A 208-amino-acid polypeptide reads, in one-letter code: Putative 3-methyladenine DNA glycosylase (208 aa).

The protein belongs to the DNA glycosylase MPG family.

The protein is Putative 3-methyladenine DNA glycosylase of Nitrobacter winogradskyi (strain ATCC 25391 / DSM 10237 / CIP 104748 / NCIMB 11846 / Nb-255).